The chain runs to 461 residues: UDP-N-acetylmuramoylalanine--D-glutamate ligase (461 aa).

117-123 provides a ligand contact to ATP; it reads GTNGKTT.

The protein belongs to the MurCDEF family.

It localises to the cytoplasm. The catalysed reaction is UDP-N-acetyl-alpha-D-muramoyl-L-alanine + D-glutamate + ATP = UDP-N-acetyl-alpha-D-muramoyl-L-alanyl-D-glutamate + ADP + phosphate + H(+). It participates in cell wall biogenesis; peptidoglycan biosynthesis. Cell wall formation. Catalyzes the addition of glutamate to the nucleotide precursor UDP-N-acetylmuramoyl-L-alanine (UMA). The chain is UDP-N-acetylmuramoylalanine--D-glutamate ligase from Synechococcus sp. (strain CC9605).